Reading from the N-terminus, the 297-residue chain is Phosphoribosylaminoimidazole-succinocarboxamide synthase (297 aa).

The protein belongs to the SAICAR synthetase family.

The enzyme catalyses 5-amino-1-(5-phospho-D-ribosyl)imidazole-4-carboxylate + L-aspartate + ATP = (2S)-2-[5-amino-1-(5-phospho-beta-D-ribosyl)imidazole-4-carboxamido]succinate + ADP + phosphate + 2 H(+). It participates in purine metabolism; IMP biosynthesis via de novo pathway; 5-amino-1-(5-phospho-D-ribosyl)imidazole-4-carboxamide from 5-amino-1-(5-phospho-D-ribosyl)imidazole-4-carboxylate: step 1/2. The sequence is that of Phosphoribosylaminoimidazole-succinocarboxamide synthase from Corynebacterium urealyticum (strain ATCC 43042 / DSM 7109).